The primary structure comprises 147 residues: Large ribosomal subunit protein uL13 (147 aa).

This sequence belongs to the universal ribosomal protein uL13 family. In terms of assembly, part of the 50S ribosomal subunit.

Functionally, this protein is one of the early assembly proteins of the 50S ribosomal subunit, although it is not seen to bind rRNA by itself. It is important during the early stages of 50S assembly. The sequence is that of Large ribosomal subunit protein uL13 from Rhodococcus opacus (strain B4).